Reading from the N-terminus, the 524-residue chain is Coatomer subunit delta-1 (524 aa).

The interval 215–244 (MDMDSFASKPKGGRPSAAATAPGKGLGMKL) is disordered. Positions 283–524 (SDPVTVTIEE…RLVAANYQVV (242 aa)) constitute an MHD domain.

Belongs to the adaptor complexes medium subunit family. Delta-COP subfamily. In terms of assembly, oligomeric complex that consists of at least the alpha, beta, beta', gamma, delta, epsilon and zeta subunits.

Its subcellular location is the cytoplasm. It localises to the golgi apparatus membrane. The protein localises to the cytoplasmic vesicle. It is found in the COPI-coated vesicle membrane. Functionally, the coatomer is a cytosolic protein complex that binds to dilysine motifs and reversibly associates with Golgi non-clathrin-coated vesicles, which further mediate biosynthetic protein transport from the ER, via the Golgi up to the trans Golgi network. Coatomer complex is required for budding from Golgi membranes, and is essential for the retrograde Golgi-to-ER transport of dilysine-tagged proteins. The chain is Coatomer subunit delta-1 from Oryza sativa subsp. japonica (Rice).